The chain runs to 202 residues: Coiled-coil domain-containing protein 85B (202 aa).

Met-1 carries the post-translational modification N-acetylmethionine. Coiled coils occupy residues 44 to 82 (RLMQ…DLCC) and 118 to 141 (QKLA…KELC). Over residues 152 to 162 (GGPGGAVGSGA) the composition is skewed to gly residues. The segment at 152 to 202 (GGPGGAVGSGAGPTPELALPPCGPRDLGDGSSSTGSVGSPDQLPLACSPDD) is disordered. Residues 180–190 (DGSSSTGSVGS) are compositionally biased toward low complexity.

Belongs to the CCDC85 family. As to quaternary structure, interacts with CEBPB. May interact with CEBPD. Interacts with EURL. Interacts with MCRS1. Interacts with TCF7L2; competes with CTNNB1. Interacts with ANKRD26. Interacts with the beta-catenin family proteins ARVCF, CTNND1, CTNND2 and PKP4. In terms of tissue distribution, expressed in white and brown adipose tissue.

The protein localises to the nucleus. It localises to the cytoplasm. Its subcellular location is the cytoskeleton. It is found in the microtubule organizing center. The protein resides in the centrosome. The protein localises to the cell junction. It localises to the adherens junction. Functions as a transcriptional repressor. May inhibit the activity of CTNNB1 in a TP53-dependent manner and thus regulate cell growth. May function in adipocyte differentiation, negatively regulating mitotic clonal expansion. Plays a role in cell-cell adhesion and epithelium development through its interaction with proteins of the beta-catenin family. The sequence is that of Coiled-coil domain-containing protein 85B (Ccdc85b) from Mus musculus (Mouse).